A 380-amino-acid chain; its full sequence is MSDTLPALRATLTELVAMDTTSFRPNVPLIDYAQARLEAAGFSAERQKFLDDAGVEKVNLVAVKGGSGSGRAALALVGHSDCVPYDAAWTDALRLTEKDGRLYARGACDTKGFIACALHAALNAEQLKAPLMVVLTADEEVGLTGAKKLVEAGLGRARHAIVGEPTRLIPVRANKGYCLAEVEVRGKEGHSAYPDSGASAIFRAGRFLQRLEHLALTVLREDLDEGFQPPFTTVNVGVIQGGKAKNVIPGACRFVVEWRPIPGQPPERVSQLLETIRQELVRDEPAFEAQIRVVRTDRGVNTRADAEVVRFLAEASGNAPETVSFGTEAPQMTELGAEAVVFGPGDIRVAHQTGEYVPVEDLVRCEAVLARAVAHFCGGR.

Residue His79 participates in Zn(2+) binding. Asp81 is a catalytic residue. Residue Asp109 participates in Zn(2+) binding. The active site involves Glu139. Positions 140, 164, and 351 each coordinate Zn(2+).

Belongs to the peptidase M20A family. ArgE subfamily. Homodimer. Zn(2+) serves as cofactor. The cofactor is Co(2+). Glutathione is required as a cofactor.

It is found in the cytoplasm. The catalysed reaction is N(2)-acetyl-L-ornithine + H2O = L-ornithine + acetate. The protein operates within amino-acid biosynthesis; L-arginine biosynthesis; L-ornithine from N(2)-acetyl-L-ornithine (linear): step 1/1. Catalyzes the hydrolysis of the amide bond of N(2)-acetylated L-amino acids. Cleaves the acetyl group from N-acetyl-L-ornithine to form L-ornithine, an intermediate in L-arginine biosynthesis pathway, and a branchpoint in the synthesis of polyamines. In Myxococcus xanthus, this protein is Acetylornithine deacetylase.